The chain runs to 25 residues: NU-conotoxin-Ltg1a (25 aa).

In terms of processing, contains 2 disulfide bonds. However, cysteine pairing is not critical for peptide binding to melanocortin receptors, since peptides with different pairings have similar potency at the receptors tested. As to expression, expressed by the venom duct.

The protein resides in the secreted. In terms of biological role, peptide with nanomolar affinity for human melanocortin receptors. The natural disulfide pairing being unknown, the activity of all three possible peptides (with the cysteine pairings 'bead (I-II, III-IV), 'globular' (I-III, II-IV), and 'ribbon' (I-IV, II-III)) have been tested. All three isomers show similar affinities on each human melanocortin subtype (MC1R (~500 nM), MC3R (~100 nM), MC4R (~50 nM), and MC5R (~50 nM)). The chain is NU-conotoxin-Ltg1a from Conus litoglyphus (Lithograph cone).